Consider the following 322-residue polypeptide: CXXC-type zinc finger protein 5 (322 aa).

The segment covering 1–10 (MSSLGGGSQD) has biased composition (gly residues). Residues 1–100 (MSSLGGGSQD…SGGGSMMGGE (100 aa)) are disordered. Composition is skewed to low complexity over residues 11–20 (AGGSSSSSTN) and 28–52 (SGPKAGAADKSAVVAAATPASVADD). T53 carries the post-translational modification Phosphothreonine. Residues 87-97 (SSGGSGGGSMM) are compositionally biased toward gly residues. The CXXC-type zinc-finger motif lies at 256–297 (GKKKRKRCGMCAPCRRRINCEQCSSCRNRKTGHQICKFRKCE). Residues 257 to 262 (KKKRKR) carry the Nuclear localization signal motif. C263, C266, C269, C275, C278, C281, C291, and C296 together coordinate Zn(2+).

Interacts with DVL1. Interacts with RBPJ.

It localises to the nucleus. Its subcellular location is the cytoplasm. Its function is as follows. May indirectly participate in activation of the NF-kappa-B and MAPK pathways. Acts as a mediator of BMP4-mediated modulation of canonical Wnt signaling activity in neural stem cells. Required for DNA damage-induced ATM phosphorylation, p53 activation and cell cycle arrest. Involved in myelopoiesis. Binds to the oxygen responsive element of COX4I2 and represses its transcription under hypoxia conditions (4% oxygen), as well as normoxia conditions (20% oxygen). May repress COX4I2 transactivation induced by CHCHD2 and RBPJ. Binds preferentially to DNA containing cytidine-phosphate-guanosine (CpG) dinucleotides over CpH (H=A, T, and C), hemimethylated-CpG and hemimethylated-hydroxymethyl-CpG. The polypeptide is CXXC-type zinc finger protein 5 (CXXC5) (Pongo abelii (Sumatran orangutan)).